We begin with the raw amino-acid sequence, 117 residues long: Ribonuclease P protein component 4 (117 aa).

Zn(2+) contacts are provided by Cys-63, Cys-66, Cys-92, and Cys-95.

The protein belongs to the eukaryotic/archaeal RNase P protein component 4 family. In terms of assembly, consists of a catalytic RNA component and at least 4 protein subunits. Forms a subcomplex with Rnp1 which stimulates the catalytic RNA. Zn(2+) is required as a cofactor.

It localises to the cytoplasm. The enzyme catalyses Endonucleolytic cleavage of RNA, removing 5'-extranucleotides from tRNA precursor.. Its function is as follows. Part of ribonuclease P, a protein complex that generates mature tRNA molecules by cleaving their 5'-ends. The RNA is catalytic, but its KM for pre-tRNA is 170-fold decreased in the presence of the 4 known protein subunits (Rnp1-4). The protein subunits also decrease the amount of Mg(2+) needed for activity. The protein is Ribonuclease P protein component 4 of Pyrococcus furiosus (strain ATCC 43587 / DSM 3638 / JCM 8422 / Vc1).